The following is a 418-amino-acid chain: Bile acid-CoA:amino acid N-acyltransferase (418 aa).

Ser125 carries the phosphoserine modification. Active-site charge relay system residues include Cys235, Asp328, and His362. Residue Ser416 is modified to Phosphoserine.

The protein belongs to the C/M/P thioester hydrolase family. Monomer. In terms of tissue distribution, expressed in the gallbladder mucosa and pancreas. Expressed in hepatocytes (at protein level).

Its subcellular location is the cytoplasm. It is found in the cytosol. The protein resides in the peroxisome. The catalysed reaction is choloyl-CoA + glycine = glycocholate + CoA + H(+). The enzyme catalyses hexadecanoyl-CoA + H2O = hexadecanoate + CoA + H(+). It carries out the reaction choloyl-CoA + H2O = cholate + CoA + H(+). It catalyses the reaction chenodeoxycholoyl-CoA + H2O = chenodeoxycholate + CoA + H(+). The catalysed reaction is eicosanoyl-CoA + H2O = eicosanoate + CoA + H(+). The enzyme catalyses octadecanoyl-CoA + H2O = octadecanoate + CoA + H(+). It carries out the reaction docosanoyl-CoA + H2O = docosanoate + CoA + H(+). It catalyses the reaction tetracosanoyl-CoA + H2O = tetracosanoate + CoA + H(+). The catalysed reaction is hexacosanoyl-CoA + H2O = hexacosanoate + CoA + H(+). The enzyme catalyses dodecanoyl-CoA + H2O = dodecanoate + CoA + H(+). It carries out the reaction tetradecanoyl-CoA + H2O = tetradecanoate + CoA + H(+). It catalyses the reaction choloyl-CoA + taurine = taurocholate + CoA + H(+). The catalysed reaction is chenodeoxycholoyl-CoA + glycine = glycochenodeoxycholate + CoA + H(+). The enzyme catalyses chenodeoxycholoyl-CoA + taurine = taurochenodeoxycholate + CoA + H(+). It carries out the reaction eicosanoyl-CoA + glycine = N-eicosanoylglycinate + CoA + H(+). It catalyses the reaction hexacosanoyl-CoA + glycine = N-hexacosanoylglycine + CoA + H(+). The catalysed reaction is docosanoyl-CoA + glycine = N-docosanoylglycine + CoA + H(+). Its function is as follows. Catalyzes the amidation of bile acids (BAs) with the amino acids taurine and glycine. More than 95% of the BAs are N-acyl amidates with glycine and taurine. Amidation of BAs in the liver with glycine or taurine prior to their excretion into bile is an important biochemical event in bile acid metabolism. This conjugation (or amidation) plays several important biological roles in that it promotes the secretion of BAs and cholesterol into bile and increases the detergent properties of BAs in the intestine, which facilitates lipid and vitamin absorption. May also act as an acyl-CoA thioesterase that regulates intracellular levels of free fatty acids. In vitro, catalyzes the hydrolysis of long- and very long-chain saturated acyl-CoAs to the free fatty acid and coenzyme A (CoASH), and conjugates glycine to these acyl-CoAs. The sequence is that of Bile acid-CoA:amino acid N-acyltransferase (BAAT) from Homo sapiens (Human).